The sequence spans 178 residues: Fatty-acid and retinol-binding protein 1 (178 aa).

A signal peptide spans 1–16 (MYHQLILLALIGTIMA). 2 coiled-coil regions span residues 67–89 (DAAL…ELRN) and 129–154 (IKQA…LKVT).

Belongs to the fatty-acid and retinol-binding protein (FARBP) family. Not glycosylated.

Its subcellular location is the secreted. Functionally, binds retinol and different fatty acids. In Loa loa (Eye worm), this protein is Fatty-acid and retinol-binding protein 1.